A 263-amino-acid chain; its full sequence is Undecaprenyl-diphosphatase 2 (263 aa).

8 consecutive transmembrane segments (helical) span residues 15-37, 42-62, 83-103, 106-126, 142-162, 183-203, 216-236, and 242-262; these read GLTE…LLGF, AKVF…VIFW, LHII…HSAI, VLFG…LMIV, ITYK…WPGF, AEYT…LDLI, LFAT…VSFL, and VKLT…YFFI.

The protein belongs to the UppP family.

It localises to the cell membrane. It catalyses the reaction di-trans,octa-cis-undecaprenyl diphosphate + H2O = di-trans,octa-cis-undecaprenyl phosphate + phosphate + H(+). In terms of biological role, catalyzes the dephosphorylation of undecaprenyl diphosphate (UPP). Confers resistance to bacitracin. This Bacillus cereus (strain ATCC 10987 / NRS 248) protein is Undecaprenyl-diphosphatase 2.